The primary structure comprises 384 residues: 8-amino-7-oxononanoate synthase (384 aa).

Arginine 21 is a substrate binding site. 108 to 109 is a pyridoxal 5'-phosphate binding site; sequence GY. A substrate-binding site is contributed by histidine 133. Pyridoxal 5'-phosphate-binding residues include serine 179, histidine 207, and threonine 233. Residue lysine 236 is modified to N6-(pyridoxal phosphate)lysine. A substrate-binding site is contributed by threonine 350.

Belongs to the class-II pyridoxal-phosphate-dependent aminotransferase family. BioF subfamily. Homodimer. The cofactor is pyridoxal 5'-phosphate.

The catalysed reaction is 6-carboxyhexanoyl-[ACP] + L-alanine + H(+) = (8S)-8-amino-7-oxononanoate + holo-[ACP] + CO2. It functions in the pathway cofactor biosynthesis; biotin biosynthesis. In terms of biological role, catalyzes the decarboxylative condensation of pimeloyl-[acyl-carrier protein] and L-alanine to produce 8-amino-7-oxononanoate (AON), [acyl-carrier protein], and carbon dioxide. This chain is 8-amino-7-oxononanoate synthase, found in Buchnera aphidicola subsp. Baizongia pistaciae (strain Bp).